We begin with the raw amino-acid sequence, 325 residues long: Aminotransferase tasG (325 aa).

Gly-35 is a binding site for substrate. Pyridoxal 5'-phosphate is bound by residues 89 to 90 (TW), Asn-143, Tyr-174, and 203 to 205 (SFA). Residue Asn-143 coordinates substrate. Lys-206 is modified (N6-(pyridoxal phosphate)lysine). Arg-214 provides a ligand contact to pyridoxal 5'-phosphate.

Belongs to the class-I pyridoxal-phosphate-dependent aminotransferase family. Homodimer. Pyridoxal 5'-phosphate serves as cofactor.

Its pathway is secondary metabolite biosynthesis. Functionally, aminotransferase; part of the gene cluster that mediates the biosynthesis of the tetramic acids Sch210971 and Sch210972, potential anti-HIV fungal natural product that contain a decalin core. The PKS module of tasS together with the enoylreductase tasC catalyze the formation of the polyketide unit which is then conjugated to 4-hydroxyl-4-methyl glutamate (HMG) by the condensation domain of the tasS NRPS module. One unique structural feature of Sch210971 and Sch210972 is the tetramic acid motif proposed to be derived from the non-proteinogenic amino acid HMG, by a Dieckmann-type condensation catalyzed by the reductase domain of tasS. The aldolase tasA catalyzes the aldol condensation of 2 molecules of pyruvic acid to yield the intermediate 4-hydroxyl-4-methyl-2-oxoglutarate (HMOG), which can then be stereoselectively transaminated, may be by tasG, to form HMG. The Diels-Alderase tas3 then uses the Dieckmann product of tasS as substrate and catalyzes the Diels-Alder cycloaddition to form the decalin ring of Sch210971 and Sch210972. This Hapsidospora irregularis protein is Aminotransferase tasG.